The sequence spans 193 residues: Holliday junction branch migration complex subunit RuvA (193 aa).

The segment at methionine 1–leucine 64 is domain I. Positions threonine 65 to leucine 139 are domain II. The flexible linker stretch occupies residues leucine 139–alanine 143. The tract at residues serine 144–valine 193 is domain III.

Belongs to the RuvA family. In terms of assembly, homotetramer. Forms an RuvA(8)-RuvB(12)-Holliday junction (HJ) complex. HJ DNA is sandwiched between 2 RuvA tetramers; dsDNA enters through RuvA and exits via RuvB. An RuvB hexamer assembles on each DNA strand where it exits the tetramer. Each RuvB hexamer is contacted by two RuvA subunits (via domain III) on 2 adjacent RuvB subunits; this complex drives branch migration. In the full resolvosome a probable DNA-RuvA(4)-RuvB(12)-RuvC(2) complex forms which resolves the HJ.

The protein localises to the cytoplasm. Its function is as follows. The RuvA-RuvB-RuvC complex processes Holliday junction (HJ) DNA during genetic recombination and DNA repair, while the RuvA-RuvB complex plays an important role in the rescue of blocked DNA replication forks via replication fork reversal (RFR). RuvA specifically binds to HJ cruciform DNA, conferring on it an open structure. The RuvB hexamer acts as an ATP-dependent pump, pulling dsDNA into and through the RuvAB complex. HJ branch migration allows RuvC to scan DNA until it finds its consensus sequence, where it cleaves and resolves the cruciform DNA. The chain is Holliday junction branch migration complex subunit RuvA from Burkholderia ambifaria (strain ATCC BAA-244 / DSM 16087 / CCUG 44356 / LMG 19182 / AMMD) (Burkholderia cepacia (strain AMMD)).